Here is a 194-residue protein sequence, read N- to C-terminus: A-type ATP synthase subunit E (194 aa).

This sequence belongs to the V-ATPase E subunit family. As to quaternary structure, has multiple subunits with at least A(3), B(3), C, D, E, F, H, I and proteolipid K(x).

The protein localises to the cell membrane. Its function is as follows. Component of the A-type ATP synthase that produces ATP from ADP in the presence of a proton gradient across the membrane. This Saccharolobus solfataricus (strain ATCC 35092 / DSM 1617 / JCM 11322 / P2) (Sulfolobus solfataricus) protein is A-type ATP synthase subunit E.